The sequence spans 227 residues: Guanylate kinase (227 aa).

Residues 21-199 (GNLFMVVAPS…ALAELECIVA (179 aa)) form the Guanylate kinase-like domain. 28–35 (APSGAGKS) is an ATP binding site.

Belongs to the guanylate kinase family.

It localises to the cytoplasm. The enzyme catalyses GMP + ATP = GDP + ADP. Essential for recycling GMP and indirectly, cGMP. This chain is Guanylate kinase, found in Burkholderia lata (strain ATCC 17760 / DSM 23089 / LMG 22485 / NCIMB 9086 / R18194 / 383).